Here is a 437-residue protein sequence, read N- to C-terminus: tRNA-2-methylthio-N(6)-dimethylallyladenosine synthase (437 aa).

The 115-residue stretch at Met1–Ala115 folds into the MTTase N-terminal domain. Positions 10, 46, 78, 148, 152, and 155 each coordinate [4Fe-4S] cluster. Residues Lys134 to Glu367 enclose the Radical SAM core domain. Residues Lys370–Gly436 form the TRAM domain.

It belongs to the methylthiotransferase family. MiaB subfamily. Monomer. [4Fe-4S] cluster serves as cofactor.

The protein localises to the cytoplasm. The enzyme catalyses N(6)-dimethylallyladenosine(37) in tRNA + (sulfur carrier)-SH + AH2 + 2 S-adenosyl-L-methionine = 2-methylsulfanyl-N(6)-dimethylallyladenosine(37) in tRNA + (sulfur carrier)-H + 5'-deoxyadenosine + L-methionine + A + S-adenosyl-L-homocysteine + 2 H(+). Functionally, catalyzes the methylthiolation of N6-(dimethylallyl)adenosine (i(6)A), leading to the formation of 2-methylthio-N6-(dimethylallyl)adenosine (ms(2)i(6)A) at position 37 in tRNAs that read codons beginning with uridine. This chain is tRNA-2-methylthio-N(6)-dimethylallyladenosine synthase, found in Helicobacter pylori (strain HPAG1).